A 694-amino-acid chain; its full sequence is Maintenance of telomere capping protein 4 (694 aa).

Residues 1–12 (MTHTNEHDHKAE) are compositionally biased toward basic and acidic residues. The segment at 1-26 (MTHTNEHDHKAEQQQNGRGDTTTETV) is disordered. Polar residues predominate over residues 13 to 26 (QQQNGRGDTTTETV). A Phosphoserine modification is found at Ser85. The segment covering 211 to 222 (YSPSNESSGSSS) has biased composition (low complexity). 3 disordered regions span residues 211-287 (YSPS…PEAQ), 325-437 (AKGS…TETY), and 465-511 (KTSN…PVGL). The segment covering 223–243 (SRRHHGHHIHPRRHLQHHSRV) has biased composition (basic residues). The segment covering 244 to 257 (RTANSVHSNTQSLT) has biased composition (polar residues). Thr263 carries the phosphothreonine modification. A compositionally biased stretch (polar residues) spans 276–287 (MITKIATTPEAQ). Residues 403 to 417 (SNGGTSRRSSNNGES) show a composition bias toward low complexity. The span at 418 to 437 (ISTNSSKSSMGITFGNTETY) shows a compositional bias: polar residues. A compositionally biased stretch (basic and acidic residues) spans 471–485 (LRAEGEQALESDKEL). Ser481 and Ser491 each carry phosphoserine. A Phosphotyrosine modification is found at Tyr493. The helical transmembrane segment at 655 to 675 (RLLEFGIVLVLWTIWFLFSVL) threads the bilayer.

The protein localises to the membrane. It is found in the cytoplasm. This Saccharomyces cerevisiae (strain ATCC 204508 / S288c) (Baker's yeast) protein is Maintenance of telomere capping protein 4 (MTC4).